We begin with the raw amino-acid sequence, 463 residues long: Glycine--tRNA ligase (463 aa).

Residues Arg98 and Glu174 each contribute to the substrate site. ATP contacts are provided by residues 206 to 208, 216 to 221, 290 to 291, and 334 to 337; these read RNE, FRTREF, EL, and GADR. 221–225 contacts substrate; it reads FEQME. 330–334 contacts substrate; that stretch reads EPSLG.

The protein belongs to the class-II aminoacyl-tRNA synthetase family. Homodimer.

It is found in the cytoplasm. The enzyme catalyses tRNA(Gly) + glycine + ATP = glycyl-tRNA(Gly) + AMP + diphosphate. Catalyzes the attachment of glycine to tRNA(Gly). This chain is Glycine--tRNA ligase, found in Staphylococcus saprophyticus subsp. saprophyticus (strain ATCC 15305 / DSM 20229 / NCIMB 8711 / NCTC 7292 / S-41).